Here is a 115-residue protein sequence, read N- to C-terminus: Chaperone protein PrsD (115 aa).

The protein belongs to the periplasmic pilus chaperone family.

The protein resides in the periplasm. Mediates assembly of pili by forming soluble multimeric complexes with pili subunits as an intermediate step in the assembly process. This is Chaperone protein PrsD (prsD) from Escherichia coli.